Consider the following 200-residue polypeptide: dITP/XTP pyrophosphatase (200 aa).

19–24 (TSNAGK) contacts substrate. The Mg(2+) site is built by Glu-49 and Asp-78. Residue Asp-78 is the Proton acceptor of the active site. Substrate-binding positions include Ser-79, 158 to 161 (FGYD), Lys-181, and 186 to 187 (HR).

It belongs to the HAM1 NTPase family. Homodimer. Requires Mg(2+) as cofactor.

The enzyme catalyses XTP + H2O = XMP + diphosphate + H(+). It catalyses the reaction dITP + H2O = dIMP + diphosphate + H(+). It carries out the reaction ITP + H2O = IMP + diphosphate + H(+). Its function is as follows. Pyrophosphatase that catalyzes the hydrolysis of nucleoside triphosphates to their monophosphate derivatives, with a high preference for the non-canonical purine nucleotides XTP (xanthosine triphosphate), dITP (deoxyinosine triphosphate) and ITP. Seems to function as a house-cleaning enzyme that removes non-canonical purine nucleotides from the nucleotide pool, thus preventing their incorporation into DNA/RNA and avoiding chromosomal lesions. This Deinococcus radiodurans (strain ATCC 13939 / DSM 20539 / JCM 16871 / CCUG 27074 / LMG 4051 / NBRC 15346 / NCIMB 9279 / VKM B-1422 / R1) protein is dITP/XTP pyrophosphatase.